Reading from the N-terminus, the 67-residue chain is Sec-independent protein translocase protein TatA (67 aa).

The helical transmembrane segment at 1–21 (MFGIGIQELLVVLVLVLLVFG) threads the bilayer. The tract at residues 46–67 (PDEIDITPGKKNGKTDKDDKQA) is disordered. Positions 58-67 (GKTDKDDKQA) are enriched in basic and acidic residues.

It belongs to the TatA/E family. The Tat system comprises two distinct complexes: a TatABC complex, containing multiple copies of TatA, TatB and TatC subunits, and a separate TatA complex, containing only TatA subunits. Substrates initially bind to the TatABC complex, which probably triggers association of the separate TatA complex to form the active translocon.

Its subcellular location is the cell inner membrane. Functionally, part of the twin-arginine translocation (Tat) system that transports large folded proteins containing a characteristic twin-arginine motif in their signal peptide across membranes. TatA could form the protein-conducting channel of the Tat system. The protein is Sec-independent protein translocase protein TatA of Nitratidesulfovibrio vulgaris (strain DSM 19637 / Miyazaki F) (Desulfovibrio vulgaris).